The chain runs to 99 residues: Pterin-4-alpha-carbinolamine dehydratase (99 aa).

Belongs to the pterin-4-alpha-carbinolamine dehydratase family.

It carries out the reaction (4aS,6R)-4a-hydroxy-L-erythro-5,6,7,8-tetrahydrobiopterin = (6R)-L-erythro-6,7-dihydrobiopterin + H2O. Involved in tetrahydrobiopterin biosynthesis. This chain is Pterin-4-alpha-carbinolamine dehydratase (pcbd), found in Dictyostelium discoideum (Social amoeba).